A 290-amino-acid polypeptide reads, in one-letter code: Dual-specificity RNA pseudouridine synthase RluF (290 aa).

The region spanning 7-74 (VRLNKYISES…EDLVLIALNK (68 aa)) is the S4 RNA-binding domain. Interaction with RNA regions lie at residues 105-108 (RLDK) and 187-190 (RQIR). The active-site Nucleophile is Asp107. A disordered region spans residues 241–290 (SEAKPKAKAKPKTVGIKRPVVKMEKTAEKGGRPASNGKRFTSPGRKKKGR). Basic and acidic residues predominate over residues 261-271 (VKMEKTAEKGG).

The protein belongs to the pseudouridine synthase RsuA family. As to quaternary structure, monomer.

It catalyses the reaction uridine(2604) in 23S rRNA = pseudouridine(2604) in 23S rRNA. The catalysed reaction is uridine(35) in tRNA(Tyr) = pseudouridine(35) in tRNA(Tyr). Its function is as follows. Dual specificity enzyme that catalyzes the synthesis of pseudouridine from uracil-2604 in 23S ribosomal RNA and from uracil-35 in the anticodon of tRNA(Tyr). This chain is Dual-specificity RNA pseudouridine synthase RluF (rluF), found in Escherichia coli O6:H1 (strain CFT073 / ATCC 700928 / UPEC).